The sequence spans 297 residues: Chelated iron transport system membrane protein YfeD (297 aa).

8 consecutive transmembrane segments (helical) span residues 20–40 (AIVAAIVTGVVCAILSCYLVL), 58–78 (IVLAFWLGIPLVIGAFVSGIF), 96–116 (TVMGIVFSGMFAFGLVLFSRI), 133–153 (ISLTELKQTLWIAGFTLLVVL), 172–192 (IGLPVKFLHYGLLCLLALTIV), 197–217 (AVGVILVIAMLIAPGIIAFMI), 224–244 (MLVVATLVSVVACVLGTLISF), and 248–268 (GATGPCIVIIQALFFVVALIY).

This sequence belongs to the ABC-3 integral membrane protein family.

It localises to the cell inner membrane. In terms of biological role, part of an ATP-driven transport system YfeABCD for chelated iron. This Yersinia pestis protein is Chelated iron transport system membrane protein YfeD (yfeD).